A 241-amino-acid chain; its full sequence is 2-C-methyl-D-erythritol 4-phosphate cytidylyltransferase (241 aa).

Belongs to the IspD/TarI cytidylyltransferase family. IspD subfamily.

It carries out the reaction 2-C-methyl-D-erythritol 4-phosphate + CTP + H(+) = 4-CDP-2-C-methyl-D-erythritol + diphosphate. The protein operates within isoprenoid biosynthesis; isopentenyl diphosphate biosynthesis via DXP pathway; isopentenyl diphosphate from 1-deoxy-D-xylulose 5-phosphate: step 2/6. Its function is as follows. Catalyzes the formation of 4-diphosphocytidyl-2-C-methyl-D-erythritol from CTP and 2-C-methyl-D-erythritol 4-phosphate (MEP). The polypeptide is 2-C-methyl-D-erythritol 4-phosphate cytidylyltransferase (Baumannia cicadellinicola subsp. Homalodisca coagulata).